The primary structure comprises 239 residues: Endolytic peptidoglycan transglycosylase RlpA (239 aa).

A signal peptide spans 1-25 (MTLTRKTLFLLTAAFGIHSFQTASA). The region spanning 160-239 (VAENKDIFID…GMVRAVLTAG (80 aa)) is the SPOR domain.

This sequence belongs to the RlpA family.

Functionally, lytic transglycosylase with a strong preference for naked glycan strands that lack stem peptides. The chain is Endolytic peptidoglycan transglycosylase RlpA from Neisseria meningitidis serogroup A / serotype 4A (strain DSM 15465 / Z2491).